The chain runs to 248 residues: 3-deoxy-manno-octulosonate cytidylyltransferase (248 aa).

This sequence belongs to the KdsB family. The cofactor is Mg(2+).

It is found in the cytoplasm. The enzyme catalyses 3-deoxy-alpha-D-manno-oct-2-ulosonate + CTP = CMP-3-deoxy-beta-D-manno-octulosonate + diphosphate. Its pathway is nucleotide-sugar biosynthesis; CMP-3-deoxy-D-manno-octulosonate biosynthesis; CMP-3-deoxy-D-manno-octulosonate from 3-deoxy-D-manno-octulosonate and CTP: step 1/1. It functions in the pathway bacterial outer membrane biogenesis; lipopolysaccharide biosynthesis. In terms of biological role, activates KDO (a required 8-carbon sugar) for incorporation into bacterial lipopolysaccharide in Gram-negative bacteria. The chain is 3-deoxy-manno-octulosonate cytidylyltransferase from Escherichia coli O157:H7.